The primary structure comprises 71 residues: Conotoxin De13.1 (71 aa).

The first 19 residues, 1–19 (MSGMGVLLLVLLLVMPLAA), serve as a signal peptide directing secretion. A propeptide spanning residues 20 to 35 (FHQDGEGEATRRSGGL) is cleaved from the precursor. Pro-40 and Pro-44 each carry 4-hydroxyproline. Trp-51 is modified (6'-bromotryptophan). The residue at position 52 (Glu-52) is a 4-carboxyglutamate. Residue Lys-55 is modified to 5-hydroxylysine. Pro-58 carries the 4-hydroxyproline modification. A Histidine amide modification is found at His-69.

This sequence belongs to the conotoxin G superfamily. Contains 4 disulfide bonds. As to expression, expressed by the venom duct.

The protein resides in the secreted. The chain is Conotoxin De13.1 from Conasprella delessertii (Sozon's cone).